The following is a 436-amino-acid chain: GTPase Obg (436 aa).

Residues 2–160 form the Obg domain; that stretch reads SMFLDTAKIK…RELQLELKIL (159 aa). The OBG-type G domain maps to 161–338; it reads ADVGLVGFPS…LLDATAELLD (178 aa). GTP contacts are provided by residues 167-174, 192-196, 214-217, 284-287, and 319-321; these read GFPSVGKS, FTTIV, DLPG, NKMD, and SGL. 2 residues coordinate Mg(2+): Ser-174 and Thr-194. An OCT domain is found at 358–436; the sequence is GFDEEEKAFE…IGKFEFEFVD (79 aa).

This sequence belongs to the TRAFAC class OBG-HflX-like GTPase superfamily. OBG GTPase family. As to quaternary structure, monomer. Requires Mg(2+) as cofactor.

The protein localises to the cytoplasm. Functionally, an essential GTPase which binds GTP, GDP and possibly (p)ppGpp with moderate affinity, with high nucleotide exchange rates and a fairly low GTP hydrolysis rate. Plays a role in control of the cell cycle, stress response, ribosome biogenesis and in those bacteria that undergo differentiation, in morphogenesis control. This is GTPase Obg from Streptococcus pneumoniae serotype 2 (strain D39 / NCTC 7466).